Here is a 180-residue protein sequence, read N- to C-terminus: Large ribosomal subunit protein uL6 (180 aa).

Belongs to the universal ribosomal protein uL6 family. Part of the 50S ribosomal subunit.

In terms of biological role, this protein binds to the 23S rRNA, and is important in its secondary structure. It is located near the subunit interface in the base of the L7/L12 stalk, and near the tRNA binding site of the peptidyltransferase center. The polypeptide is Large ribosomal subunit protein uL6 (Dictyoglomus thermophilum (strain ATCC 35947 / DSM 3960 / H-6-12)).